Consider the following 332-residue polypeptide: HPr kinase/phosphorylase (332 aa).

Active-site residues include His153 and Lys174. 168 to 175 (GKSGLGKS) is an ATP binding site. Ser175 is a Mg(2+) binding site. Residue Asp192 is the Proton acceptor; for phosphorylation activity. Proton donor; for dephosphorylation activity of the active site. Residues 217–226 (MEIRGLGVVD) are important for the catalytic mechanism of both phosphorylation and dephosphorylation. Glu218 provides a ligand contact to Mg(2+). Residue Arg259 is part of the active site. The interval 280–285 (PIFPGK) is important for the catalytic mechanism of dephosphorylation.

It belongs to the HPrK/P family. Homohexamer. Mg(2+) is required as a cofactor.

The catalysed reaction is [HPr protein]-L-serine + ATP = [HPr protein]-O-phospho-L-serine + ADP + H(+). The enzyme catalyses [HPr protein]-O-phospho-L-serine + phosphate + H(+) = [HPr protein]-L-serine + diphosphate. Its function is as follows. Catalyzes the ATP- as well as the pyrophosphate-dependent phosphorylation of a specific serine residue in HPr, a phosphocarrier protein of the phosphoenolpyruvate-dependent sugar phosphotransferase system (PTS). HprK/P also catalyzes the pyrophosphate-producing, inorganic phosphate-dependent dephosphorylation (phosphorolysis) of seryl-phosphorylated HPr (P-Ser-HPr). In Chlorobium phaeovibrioides (strain DSM 265 / 1930) (Prosthecochloris vibrioformis (strain DSM 265)), this protein is HPr kinase/phosphorylase.